The chain runs to 866 residues: Ribosome biogenesis protein BOP1 homolog (866 aa).

Disordered regions lie at residues 1–180 (MVAN…EETR) and 214–241 (PPEA…EEDI). Acidic residues-rich tracts occupy residues 37 to 52 (VDDE…DEEN), 60 to 146 (GNDE…LEEP), and 167 to 179 (TAED…DEET). WD repeat units follow at residues 527–566 (GHTD…CIRT), 568–608 (PTGD…SLLV), 697–735 (KSKG…LLKK), 738–777 (PSCK…RPYQ), 781–820 (LHHS…DLLQ), and 836–866 (VNDF…RLYT).

It belongs to the WD repeat BOP1/ERB1 family.

It is found in the nucleus. The protein localises to the nucleolus. It localises to the nucleoplasm. Its function is as follows. Required for maturation of ribosomal RNAs and formation of the large ribosomal subunit. The polypeptide is Ribosome biogenesis protein BOP1 homolog (Aedes aegypti (Yellowfever mosquito)).